We begin with the raw amino-acid sequence, 326 residues long: Protein spaetzle (326 aa).

An N-terminal signal peptide occupies residues 1-25 (MMTPMWISLFKVLLLLFAFFATYEA). N-linked (GlcNAc...) asparagine glycosylation occurs at asparagine 48. The disordered stretch occupies residues 56–82 (FMPIPTQHDDPTQKQKQNQNQSPIPET). Positions 69–80 (KQKQNQNQSPIP) are enriched in polar residues. 2 N-linked (GlcNAc...) asparagine glycosylation sites follow: asparagine 114 and asparagine 164. The tract at residues 152 to 174 (YRPPQSPARPLRNDTKEHNPCAK) is disordered. A compositionally biased stretch (basic and acidic residues) spans 162–174 (LRNDTKEHNPCAK). A Spaetzle domain is found at 228–322 (FLCRSIRKLV…FKIPSCCKCA (95 aa)). Disulfide bonds link cysteine 230-cysteine 288, cysteine 267-cysteine 319, and cysteine 274-cysteine 321.

As to quaternary structure, homodimer; disulfide-linked. In the presence of Tl, crystal structures show one Tl molecule bound to a spaetzle C-106 homodimer. However, the active complex probably consists of two Tl molecules bound to a spaetzle C-106 homodimer. This is supported by in vitro experiments which also show binding of the spaetzle C-106 dimer to 2 Tl receptors. Ligand binding induces conformational changes in the extracellular domain of Tl. This may enable a secondary homodimerization interface at the C-terminus of the Tl extracellular domain. Post-translationally, during embryonic development proteolytically processed by activated ea/easter; ea cleaves the signal peptide and also generates the C-terminal 12 kDa active ligand for the Toll receptor, C-106 (except for isoform 8.24 and isoform 11.27 as they do not contain the cleavage site). During the immune response, cleaved in the same manner by SPE. Extracellular forms of isoform 8.19 and isoform 11.7 are glycosylated.

The protein localises to the secreted. In terms of biological role, the activated form, spaetzle C-106, acts as a ligand for the Toll receptor. Binding to Toll activates the Toll signaling pathway and induces expression of the antifungal peptide drosomycin. Component of the extracellular signaling pathway that establishes dorsal-ventral polarity in the embryo. This chain is Protein spaetzle, found in Drosophila melanogaster (Fruit fly).